The following is a 401-amino-acid chain: Ribosomal RNA dihydrouridine synthase (401 aa).

9 residues coordinate FAD: Ala-15, Asp-34, Asn-35, Arg-41, Gly-47, Asn-52, Val-132, Glu-371, and Phe-384.

The protein belongs to the BaiN/RdsA family. RdsA subfamily. Requires FAD as cofactor.

It carries out the reaction a 5,6-dihydrouridine in mRNA + NAD(+) = a uridine in mRNA + NADH + H(+). Catalyzes the synthesis of 5,6-dihydrouridine (D) at position 2449 in 23S rRNA. The protein is Ribosomal RNA dihydrouridine synthase of Haemophilus influenzae (strain ATCC 51907 / DSM 11121 / KW20 / Rd).